The chain runs to 461 residues: Bifunctional protein HldE (461 aa).

The segment at 1 to 315 (MKKILVIGDL…LILNQTHPKI (315 aa)) is ribokinase. 191–194 (NRTE) contacts ATP. Residue Asp260 is part of the active site. Residues 332-461 (FTNGCFDLLH…IEKIKRTCND (130 aa)) are cytidylyltransferase.

This sequence in the N-terminal section; belongs to the carbohydrate kinase PfkB family. In the C-terminal section; belongs to the cytidylyltransferase family. In terms of assembly, homodimer.

It carries out the reaction D-glycero-beta-D-manno-heptose 7-phosphate + ATP = D-glycero-beta-D-manno-heptose 1,7-bisphosphate + ADP + H(+). The enzyme catalyses D-glycero-beta-D-manno-heptose 1-phosphate + ATP + H(+) = ADP-D-glycero-beta-D-manno-heptose + diphosphate. It functions in the pathway nucleotide-sugar biosynthesis; ADP-L-glycero-beta-D-manno-heptose biosynthesis; ADP-L-glycero-beta-D-manno-heptose from D-glycero-beta-D-manno-heptose 7-phosphate: step 1/4. It participates in nucleotide-sugar biosynthesis; ADP-L-glycero-beta-D-manno-heptose biosynthesis; ADP-L-glycero-beta-D-manno-heptose from D-glycero-beta-D-manno-heptose 7-phosphate: step 3/4. The protein operates within bacterial outer membrane biogenesis; LPS core biosynthesis. In terms of biological role, catalyzes the phosphorylation of D-glycero-D-manno-heptose 7-phosphate at the C-1 position to selectively form D-glycero-beta-D-manno-heptose-1,7-bisphosphate. Catalyzes the ADP transfer from ATP to D-glycero-beta-D-manno-heptose 1-phosphate, yielding ADP-D-glycero-beta-D-manno-heptose. This chain is Bifunctional protein HldE, found in Helicobacter pylori (strain ATCC 700392 / 26695) (Campylobacter pylori).